We begin with the raw amino-acid sequence, 432 residues long: Eukaryotic translation initiation factor 3 subunit E (432 aa).

In terms of domain architecture, PCI spans 221–401 (VYYNYPKGRD…MGVKSVSIHE (181 aa)).

Belongs to the eIF-3 subunit E family. As to quaternary structure, component of the eukaryotic translation initiation factor 3 (eIF-3) complex.

Its subcellular location is the cytoplasm. Its function is as follows. Component of the eukaryotic translation initiation factor 3 (eIF-3) complex, which is involved in protein synthesis of a specialized repertoire of mRNAs and, together with other initiation factors, stimulates binding of mRNA and methionyl-tRNAi to the 40S ribosome. The eIF-3 complex specifically targets and initiates translation of a subset of mRNAs involved in cell proliferation. This is Eukaryotic translation initiation factor 3 subunit E from Caenorhabditis elegans.